The sequence spans 475 residues: Cysteine--tRNA ligase (475 aa).

Cysteine 28 serves as a coordination point for Zn(2+). The 'HIGH' region signature appears at 30–40; sequence PTVYDETHIGH. Zn(2+) contacts are provided by cysteine 208, histidine 233, and glutamate 237. The 'KMSKS' region motif lies at 265-269; sequence KMSKS. Lysine 268 lines the ATP pocket.

Belongs to the class-I aminoacyl-tRNA synthetase family. Zn(2+) serves as cofactor.

The protein localises to the cytoplasm. It carries out the reaction tRNA(Cys) + L-cysteine + ATP = L-cysteinyl-tRNA(Cys) + AMP + diphosphate. The protein is Cysteine--tRNA ligase of Methanococcus vannielii (strain ATCC 35089 / DSM 1224 / JCM 13029 / OCM 148 / SB).